Reading from the N-terminus, the 227-residue chain is Urease accessory protein UreF (227 aa).

Belongs to the UreF family. As to quaternary structure, ureD, UreF and UreG form a complex that acts as a GTP-hydrolysis-dependent molecular chaperone, activating the urease apoprotein by helping to assemble the nickel containing metallocenter of UreC. The UreE protein probably delivers the nickel.

Its subcellular location is the cytoplasm. In terms of biological role, required for maturation of urease via the functional incorporation of the urease nickel metallocenter. The chain is Urease accessory protein UreF from Bacillus sp. (strain TB-90).